The primary structure comprises 197 residues: Imidazoleglycerol-phosphate dehydratase (197 aa).

Belongs to the imidazoleglycerol-phosphate dehydratase family.

The protein resides in the cytoplasm. It catalyses the reaction D-erythro-1-(imidazol-4-yl)glycerol 3-phosphate = 3-(imidazol-4-yl)-2-oxopropyl phosphate + H2O. It participates in amino-acid biosynthesis; L-histidine biosynthesis; L-histidine from 5-phospho-alpha-D-ribose 1-diphosphate: step 6/9. In Methylococcus capsulatus (strain ATCC 33009 / NCIMB 11132 / Bath), this protein is Imidazoleglycerol-phosphate dehydratase.